We begin with the raw amino-acid sequence, 79 residues long: Exodeoxyribonuclease 7 small subunit (79 aa).

This sequence belongs to the XseB family. In terms of assembly, heterooligomer composed of large and small subunits.

Its subcellular location is the cytoplasm. The enzyme catalyses Exonucleolytic cleavage in either 5'- to 3'- or 3'- to 5'-direction to yield nucleoside 5'-phosphates.. Functionally, bidirectionally degrades single-stranded DNA into large acid-insoluble oligonucleotides, which are then degraded further into small acid-soluble oligonucleotides. This is Exodeoxyribonuclease 7 small subunit from Shouchella clausii (strain KSM-K16) (Alkalihalobacillus clausii).